A 248-amino-acid polypeptide reads, in one-letter code: Triosephosphate isomerase (248 aa).

Residue 9-11 participates in substrate binding; that stretch reads NWK. His-94 acts as the Electrophile in catalysis. Glu-166 (proton acceptor) is an active-site residue. Substrate contacts are provided by residues Gly-172, Ser-212, and 233-234; that span reads GG.

It belongs to the triosephosphate isomerase family. In terms of assembly, homodimer.

The protein resides in the cytoplasm. The enzyme catalyses D-glyceraldehyde 3-phosphate = dihydroxyacetone phosphate. The protein operates within carbohydrate biosynthesis; gluconeogenesis. It functions in the pathway carbohydrate degradation; glycolysis; D-glyceraldehyde 3-phosphate from glycerone phosphate: step 1/1. In terms of biological role, involved in the gluconeogenesis. Catalyzes stereospecifically the conversion of dihydroxyacetone phosphate (DHAP) to D-glyceraldehyde-3-phosphate (G3P). The protein is Triosephosphate isomerase of Clostridium acetobutylicum (strain ATCC 824 / DSM 792 / JCM 1419 / IAM 19013 / LMG 5710 / NBRC 13948 / NRRL B-527 / VKM B-1787 / 2291 / W).